Reading from the N-terminus, the 238-residue chain is MKKAKILSGVLLLCFSSPLISQAATLDVRGGYRSGSHAYETRLKVSEGWQNGWWASMESNTWNTIHDNKKENAALNDVQVEVNYAIKLDDQWTVRPGMLTHFSSNGTRYGPYVKLSWDATKDLNFGIRYRYDWKAYRQQDLSGDMSRDNVHRWDGYVTYHINSDFTFAWQTTLYSKQNDYRYANHKKWATENAFVLQYHMTPDITPYIEYDYLDRQGVYNGRDNLSENSYRIGVSFKL.

The N-terminal stretch at 1 to 23 (MKKAKILSGVLLLCFSSPLISQA) is a signal peptide. Residues 24 to 25 (AT) are Periplasmic-facing. The chain crosses the lipid bilayer at residues 26-32 (LDVRGGY). At 33–39 (RSGSHAY) the chain is on the extracellular side. A transmembrane helix spans residues 40–49 (ETRLKVSEGW). At 50–52 (QNG) the chain is on the periplasmic side. The segment at 53–61 (WWASMESNT) is a transmembrane helix. Over 62–76 (WNTIHDNKKENAALN) the chain is Extracellular. Over 77-86 (DVQVEVNYAI) the chain traverses the membrane. Topologically, residues 87–91 (KLDDQ) are periplasmic. A transmembrane span lies at residues 92 to 102 (WTVRPGMLTHF). Residues 103-107 (SSNGT) lie on the Extracellular side of the membrane. Positions 108–117 (RYGPYVKLSW) form a transmembrane segment. The Periplasmic segment spans residues 118 to 122 (DATKD). Over 123–132 (LNFGIRYRYD) the chain traverses the membrane. Residues 133–151 (WKAYRQQDLSGDMSRDNVH) are Extracellular-facing. A transmembrane helix spans residues 152–159 (RWDGYVTY). The Periplasmic segment spans residues 160-164 (HINSD). The chain crosses the lipid bilayer at residues 165–173 (FTFAWQTTL). At 174–190 (YSKQNDYRYANHKKWAT) the chain is on the extracellular side. The chain crosses the lipid bilayer at residues 191 to 200 (ENAFVLQYHM). Topologically, residues 201-203 (TPD) are periplasmic. Residues 204–212 (ITPYIEYDY) are membrane-embedded. Residues 213 to 228 (LDRQGVYNGRDNLSEN) lie on the Extracellular side of the membrane. Over 229-236 (SYRIGVSF) the chain traverses the membrane. Residues 237 to 238 (KL) lie on the Periplasmic side of the membrane.

It belongs to the oligogalacturonate-specific porin KdgM (TC 1.B.35) family. NanC subfamily. In terms of assembly, monomer.

It localises to the cell outer membrane. It carries out the reaction N-acetylneuraminate(in) = N-acetylneuraminate(out). Outer membrane channel protein allowing the entry of N-acetylneuraminic acid (Neu5Ac, the most abundant sialic acid on host cell surfaces) into the bacteria. NanC proteins form high-conductance channels which are open at low membrane potentials and which have a weak anion selectivity. This is N-acetylneuraminic acid outer membrane channel protein NanC (nanC) from Escherichia coli O157:H7.